Consider the following 248-residue polypeptide: MRFPTPLIEGRLVRRYKRFLADVRLPDGTMVTAHCANPGAMLGLNTDGFRVLLSPSTNPLRKLGYSWELVEAELPGGPQWVGINTARPNALVAEAFRENKLAPLIGYETLRPEVAYGKASRVDFLASGGGRPPCHVEVKNCHLMRHAGLAEFPDCKAARSARHMEELAGVVTAGGRAMLIVVIQMRAGAFDVARDIDPVFDRALRMALEVGVEAYAYTCAVGPEGVAIDTPVPILTPGATVQPARTSG.

The protein belongs to the SfsA family.

In Methylorubrum extorquens (strain CM4 / NCIMB 13688) (Methylobacterium extorquens), this protein is Sugar fermentation stimulation protein homolog.